A 347-amino-acid polypeptide reads, in one-letter code: Glycerol-3-phosphate dehydrogenase [NAD(P)+] (347 aa).

Positions 20, 39, and 118 each coordinate NADPH. Lysine 118, glycine 152, and serine 154 together coordinate sn-glycerol 3-phosphate. NADPH is bound at residue alanine 156. 5 residues coordinate sn-glycerol 3-phosphate: lysine 207, aspartate 260, serine 270, arginine 271, and asparagine 272. Lysine 207 acts as the Proton acceptor in catalysis. Residue arginine 271 participates in NADPH binding. NADPH is bound by residues valine 295 and glutamate 297.

Belongs to the NAD-dependent glycerol-3-phosphate dehydrogenase family.

The protein localises to the cytoplasm. The catalysed reaction is sn-glycerol 3-phosphate + NAD(+) = dihydroxyacetone phosphate + NADH + H(+). It catalyses the reaction sn-glycerol 3-phosphate + NADP(+) = dihydroxyacetone phosphate + NADPH + H(+). The protein operates within membrane lipid metabolism; glycerophospholipid metabolism. Catalyzes the reduction of the glycolytic intermediate dihydroxyacetone phosphate (DHAP) to sn-glycerol 3-phosphate (G3P), the key precursor for phospholipid synthesis. This chain is Glycerol-3-phosphate dehydrogenase [NAD(P)+], found in Cupriavidus pinatubonensis (strain JMP 134 / LMG 1197) (Cupriavidus necator (strain JMP 134)).